We begin with the raw amino-acid sequence, 246 residues long: Cell division protein ZapD (246 aa).

Belongs to the ZapD family. In terms of assembly, interacts with FtsZ.

Its subcellular location is the cytoplasm. In terms of biological role, cell division factor that enhances FtsZ-ring assembly. Directly interacts with FtsZ and promotes bundling of FtsZ protofilaments, with a reduction in FtsZ GTPase activity. This is Cell division protein ZapD from Vibrio atlanticus (strain LGP32) (Vibrio splendidus (strain Mel32)).